The chain runs to 165 residues: Probable cell wall protein PGA15 (165 aa).

Positions 1 to 16 are cleaved as a signal peptide; that stretch reads MKFIIILFTLISIVTA. Residue serine 143 is the site of GPI-anchor amidated serine attachment. The propeptide at 144-165 is removed in mature form; that stretch reads GAANYLTSFSIGTFFVFVLGLI.

It belongs to the IHD1 family. Post-translationally, the GPI-anchor is attached to the protein in the endoplasmic reticulum and serves to target the protein to the cell surface. There, the glucosamine-inositol phospholipid moiety is cleaved off and the GPI-modified mannoprotein is covalently attached via its lipidless GPI glycan remnant to the 1,6-beta-glucan of the outer cell wall layer.

The protein localises to the secreted. It is found in the cell wall. Its subcellular location is the membrane. In terms of biological role, probable GPI-anchored cell wall protein that may be involved in cell wall organization, hyphal growth, as well as in virulence. The sequence is that of Probable cell wall protein PGA15 (PGA15) from Candida albicans (strain SC5314 / ATCC MYA-2876) (Yeast).